Consider the following 159-residue polypeptide: Crossover junction endodeoxyribonuclease RuvC (159 aa).

Residues aspartate 7, glutamate 67, and aspartate 139 contribute to the active site. The Mg(2+) site is built by aspartate 7, glutamate 67, and aspartate 139.

The protein belongs to the RuvC family. In terms of assembly, homodimer which binds Holliday junction (HJ) DNA. The HJ becomes 2-fold symmetrical on binding to RuvC with unstacked arms; it has a different conformation from HJ DNA in complex with RuvA. In the full resolvosome a probable DNA-RuvA(4)-RuvB(12)-RuvC(2) complex forms which resolves the HJ. The cofactor is Mg(2+).

Its subcellular location is the cytoplasm. It catalyses the reaction Endonucleolytic cleavage at a junction such as a reciprocal single-stranded crossover between two homologous DNA duplexes (Holliday junction).. In terms of biological role, the RuvA-RuvB-RuvC complex processes Holliday junction (HJ) DNA during genetic recombination and DNA repair. Endonuclease that resolves HJ intermediates. Cleaves cruciform DNA by making single-stranded nicks across the HJ at symmetrical positions within the homologous arms, yielding a 5'-phosphate and a 3'-hydroxyl group; requires a central core of homology in the junction. The consensus cleavage sequence is 5'-(A/T)TT(C/G)-3'. Cleavage occurs on the 3'-side of the TT dinucleotide at the point of strand exchange. HJ branch migration catalyzed by RuvA-RuvB allows RuvC to scan DNA until it finds its consensus sequence, where it cleaves and resolves the cruciform DNA. In Orientia tsutsugamushi (strain Boryong) (Rickettsia tsutsugamushi), this protein is Crossover junction endodeoxyribonuclease RuvC.